A 460-amino-acid polypeptide reads, in one-letter code: Putative E3 ubiquitin-protein ligase RING1b (460 aa).

The tract at residues 1–85 (MPSLKSFSAA…SQSSSAGELS (85 aa)) is disordered. The segment covering 21–31 (SEAERFNPEAV) has biased composition (basic and acidic residues). Acidic residues-rich tracts occupy residues 32 to 51 (EKEE…DEED) and 59 to 71 (EAED…EEED). The segment at 103–143 (CSICLGIIRKTRTVMECLHRFCRECIDKSMRLGNNECPTCR) adopts an RING-type zinc-finger fold. The interval 196-300 (QVSQRQSKAL…TEQTHQRDSR (105 aa)) is disordered. The span at 220–234 (RSRRSGGGSRRRRNC) shows a compositional bias: basic residues. The segment covering 240–249 (DTSEANDDDD) has biased composition (acidic residues). Basic and acidic residues predominate over residues 250–265 (QNKRGKDSSSDEPCER). Positions 276-290 (SSSNANNNDNCAGNG) are enriched in low complexity.

In terms of assembly, heterodimer with RING1A. Interacts with CLF. Component of the PRC1-like complex, at least composed of RING1A, RING1B and LHP1.

It is found in the nucleus. The enzyme catalyses S-ubiquitinyl-[E2 ubiquitin-conjugating enzyme]-L-cysteine + [acceptor protein]-L-lysine = [E2 ubiquitin-conjugating enzyme]-L-cysteine + N(6)-ubiquitinyl-[acceptor protein]-L-lysine.. It functions in the pathway protein modification; protein ubiquitination. Functionally, putative E3 ubiquitin-protein ligase that mediates monoubiquitination of 'Lys-119' of histone H2A (H2AK119ub), thereby playing a central role in histone code and gene regulation. As part of the PRC1-like complex, repress class I KNOX gene expression. PcG PRC1 complex maintains the transcriptionally repressive state of many genes, including Hox genes, throughout development. PcG PRC1 complex acts via chromatin remodeling and modification of histones, rendering chromatin heritably changed in its expressibility. This Arabidopsis thaliana (Mouse-ear cress) protein is Putative E3 ubiquitin-protein ligase RING1b (RING1B).